We begin with the raw amino-acid sequence, 177 residues long: Alpha-crystallin A chain (177 aa).

N-acetylmethionine is present on Met-1. A sHSP domain is found at 52 to 162 (VFRNFLDSGI…NWQDRPIPVS (111 aa)). His-100 and Glu-102 together coordinate Zn(2+). A disulfide bridge links Cys-131 with Cys-142. A disordered region spans residues 146–177 (TRPGDDSNWQDRPIPVSREEKQGTQPEIRADP). Ser-162 is a glycosylation site (O-linked (GlcNAc) serine). The span at 162 to 177 (SREEKQGTQPEIRADP) shows a compositional bias: basic and acidic residues.

The protein belongs to the small heat shock protein (HSP20) family. In terms of assembly, heteropolymer composed of three CRYAA and one CRYAB subunits. Inter-subunit bridging via zinc ions enhances stability, which is crucial as there is no protein turn over in the lens. Can also form homodimers and homotetramers (dimers of dimers) which serve as the building blocks of homooligomers.

It localises to the cytoplasm. Its subcellular location is the nucleus. Functionally, contributes to the transparency and refractive index of the lens. May act as a chaperone, preventing aggregation of various proteins under a wide range of stress conditions. In Squalus acanthias (Spiny dogfish), this protein is Alpha-crystallin A chain (cryaa).